A 185-amino-acid polypeptide reads, in one-letter code: MINEIKKDAQERMDKSVEALKNNLSKVRTGRAHPSLLSGISVEYYGAATPLNQVANVVAEDARTLAITVFDKELTQKVEKAIMMSDLGLNPMSAGTIIRVPLPPLTEERRKDLVKIVRGEAEGGRVAVRNIRRDANNDLKALLKDKEISEDEDRKAQEEIQKLTDVAVKKIDEVLAAKEKELMEV.

This sequence belongs to the RRF family.

It localises to the cytoplasm. In terms of biological role, responsible for the release of ribosomes from messenger RNA at the termination of protein biosynthesis. May increase the efficiency of translation by recycling ribosomes from one round of translation to another. This is Ribosome-recycling factor from Vibrio parahaemolyticus serotype O3:K6 (strain RIMD 2210633).